The sequence spans 203 residues: NADH-quinone oxidoreductase subunit C (203 aa).

It belongs to the complex I 30 kDa subunit family. NDH-1 is composed of 14 different subunits. Subunits NuoB, C, D, E, F, and G constitute the peripheral sector of the complex.

It is found in the cell inner membrane. The catalysed reaction is a quinone + NADH + 5 H(+)(in) = a quinol + NAD(+) + 4 H(+)(out). In terms of biological role, NDH-1 shuttles electrons from NADH, via FMN and iron-sulfur (Fe-S) centers, to quinones in the respiratory chain. The immediate electron acceptor for the enzyme in this species is believed to be ubiquinone. Couples the redox reaction to proton translocation (for every two electrons transferred, four hydrogen ions are translocated across the cytoplasmic membrane), and thus conserves the redox energy in a proton gradient. This Verminephrobacter eiseniae (strain EF01-2) protein is NADH-quinone oxidoreductase subunit C.